Here is a 124-residue protein sequence, read N- to C-terminus: Ribonuclease pancreatic (124 aa).

The substrate site is built by Lys-7 and Arg-10. His-12 (proton acceptor) is an active-site residue. Cystine bridges form between Cys-26/Cys-84, Cys-40/Cys-95, Cys-58/Cys-110, and Cys-65/Cys-72. Residue Asn-34 is glycosylated (N-linked (GlcNAc...) asparagine; partial). Residues 41-45 (KPVBT), Lys-66, and Arg-85 contribute to the substrate site. His-119 serves as the catalytic Proton donor.

Belongs to the pancreatic ribonuclease family. As to quaternary structure, monomer. Interacts with and forms tight 1:1 complexes with RNH1. Dimerization of two such complexes may occur. Interaction with RNH1 inhibits this protein. In terms of tissue distribution, pancreas.

The protein localises to the secreted. It carries out the reaction an [RNA] containing cytidine + H2O = an [RNA]-3'-cytidine-3'-phosphate + a 5'-hydroxy-ribonucleotide-3'-[RNA].. The enzyme catalyses an [RNA] containing uridine + H2O = an [RNA]-3'-uridine-3'-phosphate + a 5'-hydroxy-ribonucleotide-3'-[RNA].. In terms of biological role, endonuclease that catalyzes the cleavage of RNA on the 3' side of pyrimidine nucleotides. Acts on single-stranded and double-stranded RNA. The sequence is that of Ribonuclease pancreatic (RNASE1) from Damaliscus korrigum (Topi).